A 210-amino-acid polypeptide reads, in one-letter code: UPF0173 protein PF0020 (210 aa).

This sequence belongs to the UPF0173 family.

This chain is UPF0173 protein PF0020, found in Pyrococcus furiosus (strain ATCC 43587 / DSM 3638 / JCM 8422 / Vc1).